The following is a 124-amino-acid chain: Fluoride-specific ion channel FluC (124 aa).

A run of 4 helical transmembrane segments spans residues 2–22 (LNIA…RWLI), 35–55 (TGTL…IAWF), 71–91 (TGFC…VALF), and 100–120 (LGTM…AFWL). The Na(+) site is built by G75 and T78.

This sequence belongs to the fluoride channel Fluc/FEX (TC 1.A.43) family.

It is found in the cell inner membrane. It carries out the reaction fluoride(in) = fluoride(out). Its activity is regulated as follows. Na(+) is not transported, but it plays an essential structural role and its presence is essential for fluoride channel function. Fluoride-specific ion channel. Important for reducing fluoride concentration in the cell, thus reducing its toxicity. The polypeptide is Fluoride-specific ion channel FluC (Proteus mirabilis (strain HI4320)).